The chain runs to 551 residues: Probable aldehyde dehydrogenase (551 aa).

Residue 278–283 (GSSRVA) participates in NAD(+) binding. Glu-297 (proton acceptor) is an active-site residue. Cys-332 (nucleophile) is an active-site residue.

The protein belongs to the aldehyde dehydrogenase family. In uninfected plants, highest levels found in stems. In plants infected with the flax rust, highest levels in leaves. Higher levels of expression in infected leaves than uninfected stems.

It catalyses the reaction an aldehyde + NAD(+) + H2O = a carboxylate + NADH + 2 H(+). In terms of biological role, could be involved in facilitating the biotrophic relationship between the plant and the rust fungus. The polypeptide is Probable aldehyde dehydrogenase (FIS1) (Linum usitatissimum (Flax)).